A 587-amino-acid chain; its full sequence is Cyclic di-GMP phosphodiesterase PA2567 (587 aa).

Positions 28 to 157 constitute a GAF domain; the sequence is DEVFEEILAA…LEHFARLVMA (130 aa). Residues 192–327 form the GGDEF domain; that stretch reads GALTVIAADL…GVGWARYNPP (136 aa). One can recognise an EAL domain in the interval 335-587; the sequence is AFTLLTSLSQ…PEQLEDWLRR (253 aa).

The enzyme catalyses 3',3'-c-di-GMP + H2O = 5'-phosphoguanylyl(3'-&gt;5')guanosine + H(+). Functionally, phosphodiesterase (PDE) that catalyzes the hydrolysis of cyclic diguanylate (c-di-GMP) to 5'-pGpG. In Pseudomonas aeruginosa (strain ATCC 15692 / DSM 22644 / CIP 104116 / JCM 14847 / LMG 12228 / 1C / PRS 101 / PAO1), this protein is Cyclic di-GMP phosphodiesterase PA2567.